The sequence spans 316 residues: MSGEGEIELLEAEERVVVVPPTQTAERIDRFLAGAMPDLSRAQVQRLIEQGFVLYDGRSPRASQPVRPGAVIQLTIPPPIPTELVAEPIPLDVVYEDADIAVINKPAGMVVHPAPGHPRGTLVNALLARYPDLAIGGELRPGIVHRLDRDTSGLLVIARHDQAMRSLVDQQQARRMRKIYQALVIGRPPETGTIDAPIGRDPRDRLRMAVVPDGRPARTHYRLLDTFGDYSLLEVQLETGRTHQIRVHLRHLGYPIVGDPVYGPRRSHLHLSRQFLHAAYLGLVHPRSGRWQEFTAPLPADLQIVLRQLQDRASYH.

The region spanning 26-98 (ERIDRFLAGA…IPLDVVYEDA (73 aa)) is the S4 RNA-binding domain. Asp-148 is an active-site residue.

It belongs to the pseudouridine synthase RluA family.

It carries out the reaction a uridine in RNA = a pseudouridine in RNA. This is an uncharacterized protein from Chloroflexus aurantiacus (strain ATCC 29366 / DSM 635 / J-10-fl).